The chain runs to 229 residues: Wtf element wtf14 (229 aa).

A compositionally biased stretch (basic and acidic residues) spans 1 to 26 (MENNHHLAKDSLDELNPKRGKGEHET). The disordered stretch occupies residues 1–27 (MENNHHLAKDSLDELNPKRGKGEHETQ). 4 helical membrane-spanning segments follow: residues 71–91 (IPAV…YLVF), 100–120 (VLFG…LLAT), 151–171 (LYAI…LMFF), and 188–208 (VIGV…PGLF).

The protein belongs to the WTF family.

Its subcellular location is the endoplasmic reticulum membrane. May act in meiotic drive. In Schizosaccharomyces pombe (strain 972 / ATCC 24843) (Fission yeast), this protein is Wtf element wtf14.